Consider the following 309-residue polypeptide: Peptidyl-prolyl cis-trans isomerase 9 (309 aa).

In terms of domain architecture, PPIase cyclophilin-type spans 8 to 173; that stretch reads FLDISVDENL…AKVLISNCGE (166 aa). 4 stretches are compositionally biased toward basic and acidic residues: residues 217-229, 239-265, 280-289, and 296-309; these read NEKK…DKRR, RSHE…RDEN, ERSATPEHWR, and WVHD…EDLV. Residues 217 to 309 form a disordered region; that stretch reads NEKKHEMRND…SHKHPEEDLV (93 aa).

Belongs to the cyclophilin-type PPIase family. As to expression, co-expressed with pdi-1 in the syncytial hypodermis.

It carries out the reaction [protein]-peptidylproline (omega=180) = [protein]-peptidylproline (omega=0). Its function is as follows. PPIases accelerate the folding of proteins. It catalyzes the cis-trans isomerization of proline imidic peptide bonds in oligopeptides. Thought to function as a catalyst in the folding and modification of cuticle collagens. This is Peptidyl-prolyl cis-trans isomerase 9 (cyn-9) from Caenorhabditis elegans.